Reading from the N-terminus, the 273-residue chain is Glucosamine-6-phosphate deaminase (273 aa).

Residue aspartate 72 is the Proton acceptor; for enolization step of the active site. Catalysis depends on aspartate 141, which acts as the For ring-opening step. Histidine 143 functions as the Proton acceptor; for ring-opening step in the catalytic mechanism. Catalysis depends on glutamate 148, which acts as the For ring-opening step.

The protein belongs to the glucosamine/galactosamine-6-phosphate isomerase family. In terms of assembly, homohexamer.

It localises to the cytoplasm. It catalyses the reaction alpha-D-glucosamine 6-phosphate + H2O = beta-D-fructose 6-phosphate + NH4(+). Its pathway is nucleotide-sugar biosynthesis; UDP-N-acetyl-alpha-D-glucosamine biosynthesis; alpha-D-glucosamine 6-phosphate from D-fructose 6-phosphate: step 1/1. In terms of biological role, catalyzes the reversible conversion of alpha-D-glucosamine 6-phosphate (GlcN-6P) into beta-D-fructose 6-phosphate (Fru-6P) and ammonium ion, a regulatory reaction step in de novo uridine diphosphate-N-acetyl-alpha-D-glucosamine (UDP-GlcNAc) biosynthesis via hexosamine pathway. This Drosophila melanogaster (Fruit fly) protein is Glucosamine-6-phosphate deaminase.